Consider the following 121-residue polypeptide: Neuromedin-B (121 aa).

The signal sequence occupies residues 1–24 (MTRQAGSSWLLRGLLLFALFASGV). Methionine 56 carries the methionine amide modification. Positions 60-121 (SLEPPSLSLV…RRLLEPLLQK (62 aa)) are excised as a propeptide.

This sequence belongs to the bombesin/neuromedin-B/ranatensin family. As to expression, in the hindbrain, expressed in the medulla surrounding the lateral half of the facial nucleus. Also expressed in the olfactory bulb and hippocampus. Detected in a subset of neurons distributed throughout the retrotrapezoid nucleus/parafacial respiratory group (RTN/pFRG). Within the RTN/pFRG, expressed in neuronal subpopulations distinct from those expressing Grp. Expressed in lung.

It localises to the secreted. The protein localises to the cell projection. Its subcellular location is the neuron projection. Stimulates smooth muscle contraction. Induces sighing by acting directly on the pre-Botzinger complex, a cluster of several thousand neurons in the ventrolateral medulla responsible for inspiration during respiratory activity. Contributes to the induction of sneezing following exposure to chemical irritants or allergens which causes release of NMB by nasal sensory neurons and activation of NMBR-expressing neurons in the sneeze-evoking region of the brainstem. These in turn activate neurons of the caudal ventral respiratory group, giving rise to the sneeze reflex. Contributes to induction of acute itch, possibly through activation of the NMBR receptor on dorsal root ganglion neurons. Increases expression of NMBR and steroidogenic mediators STAR, CYP11A1 and HSD3B1 in Leydig cells, induces secretion of testosterone by Leydig cells and also promotes Leydig cell proliferation. Plays a role in the innate immune response to influenza A virus infection by enhancing interferon alpha expression and reducing expression of IL6. Plays a role in CSF1-induced proliferation of osteoclast precursors by contributing to the positive regulation of the expression of the CSF1 receptor CSF1R. In Mus musculus (Mouse), this protein is Neuromedin-B (Nmb).